We begin with the raw amino-acid sequence, 60 residues long: Toxin 4.9.6 (60 aa).

Intrachain disulfides connect Cys-3–Cys-22, Cys-17–Cys-38, Cys-40–Cys-52, and Cys-53–Cys-58.

It belongs to the three-finger toxin family. Short-chain subfamily. Orphan group XI sub-subfamily. As to expression, expressed by the venom gland.

The protein localises to the secreted. In Dendroaspis viridis (Western green mamba), this protein is Toxin 4.9.6.